The sequence spans 358 residues: Forkhead box protein I1c (358 aa).

Residues 1–13 (MNSIHLPSHQRTS) show a composition bias toward polar residues. Disordered regions lie at residues 1 to 25 (MNSI…PKGA) and 191 to 255 (DNGN…PSGI). A DNA-binding region (fork-head) is located at residues 106 to 200 (RPPYSYSALI…DNGNFRRKRK (95 aa)).

It is found in the nucleus. Probable transcription factor. The sequence is that of Forkhead box protein I1c from Xenopus tropicalis (Western clawed frog).